Consider the following 523-residue polypeptide: Bifunctional purine biosynthesis protein PurH (523 aa).

The MGS-like domain maps to Met-1–Thr-154.

This sequence belongs to the PurH family.

It catalyses the reaction (6R)-10-formyltetrahydrofolate + 5-amino-1-(5-phospho-beta-D-ribosyl)imidazole-4-carboxamide = 5-formamido-1-(5-phospho-D-ribosyl)imidazole-4-carboxamide + (6S)-5,6,7,8-tetrahydrofolate. The enzyme catalyses IMP + H2O = 5-formamido-1-(5-phospho-D-ribosyl)imidazole-4-carboxamide. Its pathway is purine metabolism; IMP biosynthesis via de novo pathway; 5-formamido-1-(5-phospho-D-ribosyl)imidazole-4-carboxamide from 5-amino-1-(5-phospho-D-ribosyl)imidazole-4-carboxamide (10-formyl THF route): step 1/1. The protein operates within purine metabolism; IMP biosynthesis via de novo pathway; IMP from 5-formamido-1-(5-phospho-D-ribosyl)imidazole-4-carboxamide: step 1/1. In Streptomyces coelicolor (strain ATCC BAA-471 / A3(2) / M145), this protein is Bifunctional purine biosynthesis protein PurH.